The following is a 65-amino-acid chain: Putative cytochrome c oxidase subunit 5C-4 (65 aa).

A helical transmembrane segment spans residues 20–37; it reads EIIYGITLGFAVGGLWKM.

Belongs to the cytochrome c oxidase subunit 5C family.

It is found in the mitochondrion inner membrane. Functionally, this protein is one of the nuclear-coded polypeptide chains of cytochrome c oxidase, the terminal oxidase in mitochondrial electron transport. The protein is Putative cytochrome c oxidase subunit 5C-4 of Arabidopsis thaliana (Mouse-ear cress).